Here is a 168-residue protein sequence, read N- to C-terminus: Monothiol glutaredoxin-S7, chloroplastic (168 aa).

The transit peptide at 1-54 directs the protein to the chloroplast; the sequence is MAATAAASVAAISPLPGASLPRPVSARVPLLPRASPPTWRLSVGSARARSTRCL. The Glutaredoxin domain occupies 67–168; the sequence is RATLDKVVGS…QETLEKAMLS (102 aa). Lys84 serves as a coordination point for glutathione. Residue Cys92 coordinates [2Fe-2S] cluster. Glutathione is bound by residues Arg121, Phe133, and 146–147; that span reads CD.

The protein belongs to the glutaredoxin family. CGFS subfamily.

It is found in the plastid. The protein localises to the chloroplast. Its function is as follows. May only reduce GSH-thiol disulfides, but not protein disulfides. This chain is Monothiol glutaredoxin-S7, chloroplastic (GRXS7), found in Oryza sativa subsp. japonica (Rice).